A 66-amino-acid chain; its full sequence is Large ribosomal subunit protein uL29 (66 aa).

This sequence belongs to the universal ribosomal protein uL29 family.

The sequence is that of Large ribosomal subunit protein uL29 from Borrelia garinii subsp. bavariensis (strain ATCC BAA-2496 / DSM 23469 / PBi) (Borreliella bavariensis).